The primary structure comprises 157 residues: Deoxyuridine 5'-triphosphate nucleotidohydrolase (157 aa).

DUMP contacts are provided by serine 63, glycine 76, aspartate 79, tyrosine 82, lysine 87, arginine 132, phenylalanine 137, and glycine 138. A disordered region spans residues 125–157 (NDLESTERGAGGFGSTGINDEKKRKLDEAEAKE). Over residues 143–157 (NDEKKRKLDEAEAKE) the composition is skewed to basic and acidic residues.

Belongs to the dUTPase family. In terms of assembly, homotrimer. It depends on Mg(2+) as a cofactor.

The catalysed reaction is dUTP + H2O = dUMP + diphosphate + H(+). It functions in the pathway pyrimidine metabolism; dUMP biosynthesis; dUMP from dCTP (dUTP route): step 2/2. Its function is as follows. Involved in nucleotide metabolism via production of dUMP, the immediate precursor of thymidine nucleotides, and decreases the intracellular concentration of dUTP so that uracil cannot be incorporated into DNA. This chain is Deoxyuridine 5'-triphosphate nucleotidohydrolase (DUT1), found in Yarrowia lipolytica (strain CLIB 122 / E 150) (Yeast).